The primary structure comprises 379 residues: Homoserine O-succinyltransferase (379 aa).

Residues 51–360 form the AB hydrolase-1 domain; that stretch reads NAVLICHALS…DAPQGHDAFL (310 aa). Ser-157 serves as the catalytic Nucleophile. Arg-227 provides a ligand contact to substrate. Residues Asp-323 and His-356 contribute to the active site. Substrate is bound at residue Asp-357.

It belongs to the AB hydrolase superfamily. MetX family. As to quaternary structure, homodimer.

It localises to the cytoplasm. The catalysed reaction is L-homoserine + succinyl-CoA = O-succinyl-L-homoserine + CoA. Its pathway is amino-acid biosynthesis; L-methionine biosynthesis via de novo pathway; O-succinyl-L-homoserine from L-homoserine: step 1/1. Its function is as follows. Transfers a succinyl group from succinyl-CoA to L-homoserine, forming succinyl-L-homoserine. The protein is Homoserine O-succinyltransferase of Ectopseudomonas mendocina (strain ymp) (Pseudomonas mendocina).